Reading from the N-terminus, the 978-residue chain is Peroxisomal ATPase PEX6 (978 aa).

Arginine 119 carries the post-translational modification Omega-N-methylarginine. ATP contacts are provided by residues 470-477 (GPPGSGKT) and 742-749 (GPPGTGKT).

The protein belongs to the AAA ATPase family. Interacts with PEX1; forming the PEX1-PEX6 AAA ATPase complex, which is composed of a heterohexamer formed by a trimer of PEX1-PEX6 dimers. Interacts with PEX26; interaction is direct and promotes recruitment to peroxisomal membranes. Interacts with ZFAND6.

It localises to the cytoplasm. It is found in the cytosol. The protein resides in the peroxisome membrane. The protein localises to the cell projection. Its subcellular location is the cilium. It localises to the photoreceptor outer segment. It carries out the reaction ATP + H2O = ADP + phosphate + H(+). In terms of biological role, component of the PEX1-PEX6 AAA ATPase complex, a protein dislocase complex that mediates the ATP-dependent extraction of the PEX5 receptor from peroxisomal membranes, an essential step for PEX5 recycling. Specifically recognizes PEX5 monoubiquitinated at 'Cys-11', and pulls it out of the peroxisome lumen through the PEX2-PEX10-PEX12 retrotranslocation channel. Extraction by the PEX1-PEX6 AAA ATPase complex is accompanied by unfolding of the TPR repeats and release of bound cargo from PEX5. The protein is Peroxisomal ATPase PEX6 of Rattus norvegicus (Rat).